Reading from the N-terminus, the 439-residue chain is Ribosomal protein uS12 methylthiotransferase RimO (439 aa).

One can recognise an MTTase N-terminal domain in the interval 7 to 119 (KQLCLISLGC…IDIMIAKKQN (113 aa)). Residues Cys16, Cys50, Cys82, Cys151, Cys155, and Cys158 each contribute to the [4Fe-4S] cluster site. Residues 137–365 (TGSSVHAYVK…NKIALKHQNN (229 aa)) form the Radical SAM core domain.

The protein belongs to the methylthiotransferase family. RimO subfamily. The cofactor is [4Fe-4S] cluster.

It is found in the cytoplasm. The catalysed reaction is L-aspartate(89)-[ribosomal protein uS12]-hydrogen + (sulfur carrier)-SH + AH2 + 2 S-adenosyl-L-methionine = 3-methylsulfanyl-L-aspartate(89)-[ribosomal protein uS12]-hydrogen + (sulfur carrier)-H + 5'-deoxyadenosine + L-methionine + A + S-adenosyl-L-homocysteine + 2 H(+). Functionally, catalyzes the methylthiolation of an aspartic acid residue of ribosomal protein uS12. The protein is Ribosomal protein uS12 methylthiotransferase RimO of Helicobacter pylori (strain Shi470).